Here is a 714-residue protein sequence, read N- to C-terminus: ATP-dependent RNA helicase MSS116, mitochondrial (714 aa).

The transit peptide at 1–37 directs the protein to the mitochondrion; that stretch reads MSWVRSVAIRTALCRQVRSRYQSYGSTRLFSSSLRSW. Positions 74–102 match the Q motif motif; it reads SLEASRKFDKSIFRGLYNSKMKNMTVVQQ. Positions 106 to 296 constitute a Helicase ATP-binding domain; it reads MPMMDTKTGV…HETIGKEYEY (191 aa). 119 to 126 is an ATP binding site; the sequence is AKTGTGKT. Residues 234–237 carry the DEAD box motif; that stretch reads DEAD. The region spanning 335–498 is the Helicase C-terminal domain; it reads HINDKYFKAI…TSPDHFQRLG (164 aa). The tract at residues 581–714 is disordered; the sequence is SSNDRKSKRT…TYGRRDDSDE (134 aa). Composition is skewed to basic and acidic residues over residues 619–640, 656–671, and 679–697; these read RSFD…DRKS, YGDK…DKSY, and SNDR…EKRN.

The protein belongs to the DEAD box helicase family. DDX18/HAS1 subfamily.

The protein resides in the mitochondrion matrix. It carries out the reaction ATP + H2O = ADP + phosphate + H(+). In terms of biological role, ATP-dependent RNA helicase required for mitochondrial splicing of group I and II introns. Also required for efficient mitochondrial translation. This chain is ATP-dependent RNA helicase MSS116, mitochondrial (MSS116), found in Meyerozyma guilliermondii (strain ATCC 6260 / CBS 566 / DSM 6381 / JCM 1539 / NBRC 10279 / NRRL Y-324) (Yeast).